Reading from the N-terminus, the 737-residue chain is MDGSELVEPTTKCPLKHGVRFHTSFGGRSNRDWWPNQLNLKILHQHAPASNPMPAGFSYAEQVETLDVEALKRDLAALMTDSQDWWPADYGHYGPLFVRMAWHSAGTYRTGDGRGGAGGGQQRFAPLNSWPDNGNLDKARRLIWPIKQKYGARISWADLMILAADVGMETMGFKTFGFGFGREDTWEPEEDVHWGAEDTWLGDARYTGERELDKPLGAVQMGLIYVNPEGPNGKPDPLAAAHDIRETFARMAMNDEETVALIAGGHTFGKAHGAGDAAHVGVEPEAAGIALQGLGWKNSFGSGVGSDAITSGLEGPWTPNPIKWDNGFFDTLFGHEWELTKSPAGAFQWTPKDPEAGPKAPDAHDPSRQVAPMMLTTDLALRLDPNYGPISKRFHENPDQFQDAFARAWFKLTHRDMGPKARYLGPLVPQEELLWQDPLPEPQGPPIDANDIRELKAKVLATGLSVPQLVATAWASASTFRGSDKRGGANGARIRLSPQKDWAVNQPAQLANVLATLEGVQSAFNGGQTDGKTVSLADLIVLAGCAAVEQAAKAAGHDVEVPFTPGRVDASQNQTDVASFGVLEPKADGFRNYLNTDLPLTAEELLVDKAQLLTLSAPEMTVLVGGLRALNANTDQSSHGVFTTRPGSLTNDFFVNLLDMRTVWTATSEDEAQFEGRDRTTGDLKWTATRVDLIFGSNSQLRALAEVFAQSDSQGAFVGAFVAAWTKVMNLDRFDLA.

The tryptophyl-tyrosyl-methioninium (Trp-Tyr) (with M-251) cross-link spans 102–225; that stretch reads WHSAGTYRTG…LGAVQMGLIY (124 aa). The active-site Proton acceptor is the His-103. Positions 225–251 form a cross-link, tryptophyl-tyrosyl-methioninium (Tyr-Met) (with W-102); that stretch reads YVNPEGPNGKPDPLAAAHDIRETFARM. A heme b-binding site is contributed by His-266.

It belongs to the peroxidase family. Peroxidase/catalase subfamily. In terms of assembly, homodimer or homotetramer. Requires heme b as cofactor. Post-translationally, formation of the three residue Trp-Tyr-Met cross-link is important for the catalase, but not the peroxidase activity of the enzyme.

The catalysed reaction is H2O2 + AH2 = A + 2 H2O. It catalyses the reaction 2 H2O2 = O2 + 2 H2O. Its function is as follows. Bifunctional enzyme with both catalase and broad-spectrum peroxidase activity. This Caulobacter sp. (strain K31) protein is Catalase-peroxidase.